The chain runs to 88 residues: UPF0250 protein IL0958 (88 aa).

It belongs to the UPF0250 family.

The chain is UPF0250 protein IL0958 from Idiomarina loihiensis (strain ATCC BAA-735 / DSM 15497 / L2-TR).